The primary structure comprises 408 residues: Succinylornithine transaminase (408 aa).

At Lys252 the chain carries N6-(pyridoxal phosphate)lysine.

Belongs to the class-III pyridoxal-phosphate-dependent aminotransferase family. AstC subfamily. Pyridoxal 5'-phosphate serves as cofactor.

It carries out the reaction N(2)-succinyl-L-ornithine + 2-oxoglutarate = N-succinyl-L-glutamate 5-semialdehyde + L-glutamate. It functions in the pathway amino-acid degradation; L-arginine degradation via AST pathway; L-glutamate and succinate from L-arginine: step 3/5. Functionally, catalyzes the transamination of N(2)-succinylornithine and alpha-ketoglutarate into N(2)-succinylglutamate semialdehyde and glutamate. Can also act as an acetylornithine aminotransferase. The polypeptide is Succinylornithine transaminase (Salmonella heidelberg (strain SL476)).